The primary structure comprises 291 residues: Kidney mitochondrial carrier protein 1 (291 aa).

Solcar repeat units lie at residues 7-96 (KPFI…LKRL), 104-189 (ETLV…TKKH), and 198-289 (DTVY…LKKL). A run of 6 helical transmembrane segments spans residues 9–26 (FIYG…TFPI), 71–89 (GIAP…KIGT), 106–124 (LVLN…SCIA), 164–183 (GVSL…LPVY), 204–224 (FLSS…VDVV), and 264–283 (GFWP…FITY).

The protein belongs to the mitochondrial carrier (TC 2.A.29) family.

The protein localises to the mitochondrion inner membrane. The enzyme catalyses sulfite(in) + sulfate(out) = sulfite(out) + sulfate(in). It carries out the reaction thiosulfate(in) + sulfate(out) = thiosulfate(out) + sulfate(in). The catalysed reaction is sulfate(out) + phosphate(in) = sulfate(in) + phosphate(out). It catalyses the reaction oxalate(in) + sulfate(out) = oxalate(out) + sulfate(in). The enzyme catalyses malonate(in) + sulfate(out) = malonate(out) + sulfate(in). It carries out the reaction maleate(in) + sulfate(out) = maleate(out) + sulfate(in). The catalysed reaction is (S)-malate(in) + sulfate(out) = (S)-malate(out) + sulfate(in). It catalyses the reaction (3S)-citramalate(in) + sulfate(out) = (3S)-citramalate(out) + sulfate(in). The enzyme catalyses (3R)-citramalate(in) + sulfate(out) = (3R)-citramalate(out) + sulfate(in). It carries out the reaction sulfate(out) + succinate(in) = sulfate(in) + succinate(out). The catalysed reaction is (S,S)-tartrate(in) + sulfate(out) = (S,S)-tartrate(out) + sulfate(in). It catalyses the reaction (2R,3R)-tartrate(in) + sulfate(out) = (2R,3R)-tartrate(out) + sulfate(in). The enzyme catalyses D-aspartate(in) + sulfate(out) = D-aspartate(out) + sulfate(in). It carries out the reaction L-aspartate(in) + sulfate(out) = L-aspartate(out) + sulfate(in). The catalysed reaction is sulfate(in) = sulfate(out). It catalyses the reaction phosphate(in) = phosphate(out). The enzyme catalyses (S)-malate(out) = (S)-malate(in). Probable transporter. In terms of biological role, antiporter that transports inorganic anions (sulfate, sulfite, thiosulfate and phosphate) and, to a lesser extent, a variety of dicarboxylates (e.g. malonate, malate and citramalate) and, even more so, aspartate. The sulfate/sulfate exchange is much higher than the phosphate/phosphate and malate/malate exchanges. The transport affinities is higher for sulfate and thiosulfate than for any other substrate. May catalyze the export of sulfite and thiosulfate (the hydrogen sulfide degradation products) from the mitochondria, thereby modulating the level of the hydrogen sulfide. Also may mediate a very low unidirectional transport of sulfate, phosphate and (S)-malate. The protein is Kidney mitochondrial carrier protein 1 of Xenopus laevis (African clawed frog).